We begin with the raw amino-acid sequence, 703 residues long: Cyclic AMP-dependent transcription factor ATF-6 beta (703 aa).

N-acetylalanine is present on Ala-2. Positions 2–86 (AELMLLSEIA…ELLPIFPDLQ (85 aa)) are transcription activation. The Cytoplasmic segment spans residues 2-396 (AELMLLSEIA…ELKLGSGNRK (395 aa)). Disordered stretches follow at residues 87–114 (VKSE…PSSE), 229–248 (LDGS…QPKP), and 293–317 (EGPA…GNSC). Positions 89–114 (SEPSSPCSSSSLSSESSRLSTEPSSE) are enriched in low complexity. The region spanning 325 to 388 (LLKRQQRMIK…EALLAENSEL (64 aa)) is the bZIP domain. The segment at 327 to 347 (KRQQRMIKNRESACQSRRKKK) is basic motif. Residues 350–357 (LQGLEARL) form a leucine-zipper region. The helical; Signal-anchor for type II membrane protein transmembrane segment at 397–417 (VVCIMVFLLFIAFNFGPVSIS) threads the bilayer. Topologically, residues 418–703 (EPPSAPISPR…SHQPLYLNHP (286 aa)) are lumenal. The segment at 447 to 479 (PVQGVEPLQGSSQGPKEPQPSPTDQPSFSNLTA) is disordered. Residues Asn-476 and Asn-505 are each glycosylated (N-linked (GlcNAc...) asparagine). The interval 521-565 (QRHQRGRRKIPQRAQERQKSQPRKKSPPVKAVPIQPPGPPERDSV) is disordered. Positions 522 to 531 (RHQRGRRKIP) are enriched in basic residues. Asn-610, Asn-627, and Asn-676 each carry an N-linked (GlcNAc...) asparagine glycan. Positions 660-676 (STVPPSLRKQPSPTPGN) are enriched in polar residues. The tract at residues 660 to 703 (STVPPSLRKQPSPTPGNATGGPLPVSAASQAHQASHQPLYLNHP) is disordered. The segment covering 685–696 (SAASQAHQASHQ) has biased composition (low complexity).

The protein belongs to the bZIP family. ATF subfamily. As to quaternary structure, homodimer and heterodimer with ATF6-alpha. The dimer interacts with the nuclear transcription factor Y (NF-Y) trimer through direct binding to NF-Y subunit C (NF-YC). N-glycosylated. In terms of processing, during unfolded protein response, a fragment of approximately 60 kDa containing the cytoplasmic transcription factor domain is released by proteolysis. The cleavage is probably performed sequentially by site-1 (MBTPS1, S1P) and site-2 (MBTPS2, S2P) proteases. As to expression, ubiquitous.

It is found in the endoplasmic reticulum membrane. It localises to the nucleus. Functionally, precursor of the transcription factor form (Processed cyclic AMP-dependent transcription factor ATF-6 beta), which is embedded in the endoplasmic reticulum membrane. Endoplasmic reticulum stress promotes processing of this form, releasing the transcription factor form that translocates into the nucleus, where it activates transcription of genes involved in the unfolded protein response (UPR). In terms of biological role, transcription factor that acts in the unfolded protein response (UPR) pathway by activating UPR target genes induced during ER stress. Binds DNA on the 5'-CCAC[GA]-3' half of the ER stress response element (ERSE) (5'-CCAATN(9)CCAC[GA]-3') when NF-Y is bound to ERSE. The polypeptide is Cyclic AMP-dependent transcription factor ATF-6 beta (ATF6B) (Homo sapiens (Human)).